Here is a 288-residue protein sequence, read N- to C-terminus: MKNYSFTFDIPQLRKLKKIYKSFLIEKEINNNSIYFFLKKDNIQMIAYNNGTFFIKGENIQEEILNIKEILNIKDYSAIGSDEVGTGDVFGSIVVCSSYVSAENIPFLENLNIKDSKKLTDEKIIQLVPKIINKITYSLISINPYKYNILTNKGFNLNKIKAILHNDMILKNLIKIKKNVNVILDKFTSSKNYFNYLKNEKKVYKKIFFCNKAEKVHISVAAASIIARYAFLKNIFALSKKIGINLKLGASTEVDKQINFIYKKYGMNILKKIAKCNFKNITKQFIKN.

The 213-residue stretch at 76-288 (YSAIGSDEVG…KNITKQFIKN (213 aa)) folds into the RNase H type-2 domain. Positions 82, 83, and 185 each coordinate a divalent metal cation.

This sequence belongs to the RNase HII family. RnhC subfamily. Mn(2+) is required as a cofactor. It depends on Mg(2+) as a cofactor.

The protein localises to the cytoplasm. It carries out the reaction Endonucleolytic cleavage to 5'-phosphomonoester.. In terms of biological role, endonuclease that specifically degrades the RNA of RNA-DNA hybrids. The protein is Ribonuclease HIII of Phytoplasma mali (strain AT).